Consider the following 364-residue polypeptide: Sulfate/thiosulfate import ATP-binding protein CysA (364 aa).

An ABC transporter domain is found at 3 to 237 (IEIARIKKSF…PATRFVLEFM (235 aa)). Residue 35 to 42 (GPSGSGKT) participates in ATP binding.

Belongs to the ABC transporter superfamily. Sulfate/tungstate importer (TC 3.A.1.6) family. The complex is composed of two ATP-binding proteins (CysA), two transmembrane proteins (CysT and CysW) and a solute-binding protein (CysP).

It localises to the cell inner membrane. The catalysed reaction is sulfate(out) + ATP + H2O = sulfate(in) + ADP + phosphate + H(+). It catalyses the reaction thiosulfate(out) + ATP + H2O = thiosulfate(in) + ADP + phosphate + H(+). Its function is as follows. Part of the ABC transporter complex CysAWTP involved in sulfate/thiosulfate import. Responsible for energy coupling to the transport system. The chain is Sulfate/thiosulfate import ATP-binding protein CysA from Salmonella typhi.